We begin with the raw amino-acid sequence, 271 residues long: Ribosomal RNA small subunit methyltransferase A (271 aa).

Residues H11, L13, G38, E58, D86, and N101 each coordinate S-adenosyl-L-methionine.

It belongs to the class I-like SAM-binding methyltransferase superfamily. rRNA adenine N(6)-methyltransferase family. RsmA subfamily.

Its subcellular location is the cytoplasm. It carries out the reaction adenosine(1518)/adenosine(1519) in 16S rRNA + 4 S-adenosyl-L-methionine = N(6)-dimethyladenosine(1518)/N(6)-dimethyladenosine(1519) in 16S rRNA + 4 S-adenosyl-L-homocysteine + 4 H(+). Functionally, specifically dimethylates two adjacent adenosines (A1518 and A1519) in the loop of a conserved hairpin near the 3'-end of 16S rRNA in the 30S particle. May play a critical role in biogenesis of 30S subunits. The protein is Ribosomal RNA small subunit methyltransferase A of Helicobacter pylori (strain ATCC 700392 / 26695) (Campylobacter pylori).